Reading from the N-terminus, the 214-residue chain is Coiled-coil domain-containing protein 169 (214 aa).

Residues 29 to 154 (DAVQLSIFEL…NERRTYLAEM (126 aa)) adopt a coiled-coil conformation. Positions 155 to 170 (SQGSGLHQVSKRQQVD) are enriched in polar residues. Residues 155-214 (SQGSGLHQVSKRQQVDQLPRMQENLVKTGRYNPAKQKTVSAKRGPVKKITRPNHLPELHP) form a disordered region.

This sequence belongs to the CCDC169 family.

The protein is Coiled-coil domain-containing protein 169 (CCDC169) of Homo sapiens (Human).